Consider the following 347-residue polypeptide: S-adenosylmethionine:tRNA ribosyltransferase-isomerase (347 aa).

It belongs to the QueA family. In terms of assembly, monomer.

Its subcellular location is the cytoplasm. It catalyses the reaction 7-aminomethyl-7-carbaguanosine(34) in tRNA + S-adenosyl-L-methionine = epoxyqueuosine(34) in tRNA + adenine + L-methionine + 2 H(+). The protein operates within tRNA modification; tRNA-queuosine biosynthesis. In terms of biological role, transfers and isomerizes the ribose moiety from AdoMet to the 7-aminomethyl group of 7-deazaguanine (preQ1-tRNA) to give epoxyqueuosine (oQ-tRNA). In Ectopseudomonas mendocina (strain ymp) (Pseudomonas mendocina), this protein is S-adenosylmethionine:tRNA ribosyltransferase-isomerase.